The sequence spans 284 residues: 2-dehydro-3-deoxyphosphooctonate aldolase (284 aa).

It belongs to the KdsA family.

It localises to the cytoplasm. The enzyme catalyses D-arabinose 5-phosphate + phosphoenolpyruvate + H2O = 3-deoxy-alpha-D-manno-2-octulosonate-8-phosphate + phosphate. Its pathway is carbohydrate biosynthesis; 3-deoxy-D-manno-octulosonate biosynthesis; 3-deoxy-D-manno-octulosonate from D-ribulose 5-phosphate: step 2/3. It participates in bacterial outer membrane biogenesis; lipopolysaccharide biosynthesis. The protein is 2-dehydro-3-deoxyphosphooctonate aldolase of Bordetella petrii (strain ATCC BAA-461 / DSM 12804 / CCUG 43448).